The primary structure comprises 50 residues: Apoptotic protease-activating factor 1 (50 aa).

The region spanning 1 to 31 (ILKKDNYSYISFYNALIHEGYKDLAALLHSG) is the CARD domain. In terms of domain architecture, NB-ARC spans 46–50 (GGITS).

In terms of assembly, monomer. Oligomerizes to a heptameric ring, known as the apoptosome, upon binding of cytochrome c and dATP. Oligomeric Apaf-1 and pro-caspase-9 bind to each other via their respective NH2-terminal CARD domains and consecutively mature caspase-9 is released from the complex. Interacts with APIP. Interacts (via CARD and NACHT domains) with NAIP/BIRC1 (via NACHT domain). Interacts with CIAO2A.

Its function is as follows. Oligomeric Apaf-1 mediates the cytochrome c-dependent autocatalytic activation of pro-caspase 9 (Apaf-3), leading to the activation of caspase-3 and apoptosis. This activation requires ATP. The polypeptide is Apoptotic protease-activating factor 1 (APAF1) (Canis lupus familiaris (Dog)).